The sequence spans 213 residues: Pyridoxine/pyridoxamine 5'-phosphate oxidase (213 aa).

Residues 9–12 and K67 each bind substrate; that span reads RLEY. FMN-binding positions include 62–67, 77–78, R83, K84, and Q106; these read RIVLLK and YT. Positions 124, 128, and 132 each coordinate substrate. FMN-binding positions include 141–142 and W185; that span reads QS. Residue 191–193 participates in substrate binding; the sequence is RLH. FMN is bound at residue R195.

Belongs to the pyridoxamine 5'-phosphate oxidase family. In terms of assembly, homodimer. It depends on FMN as a cofactor.

The catalysed reaction is pyridoxamine 5'-phosphate + O2 + H2O = pyridoxal 5'-phosphate + H2O2 + NH4(+). It catalyses the reaction pyridoxine 5'-phosphate + O2 = pyridoxal 5'-phosphate + H2O2. It functions in the pathway cofactor metabolism; pyridoxal 5'-phosphate salvage; pyridoxal 5'-phosphate from pyridoxamine 5'-phosphate: step 1/1. The protein operates within cofactor metabolism; pyridoxal 5'-phosphate salvage; pyridoxal 5'-phosphate from pyridoxine 5'-phosphate: step 1/1. In terms of biological role, catalyzes the oxidation of either pyridoxine 5'-phosphate (PNP) or pyridoxamine 5'-phosphate (PMP) into pyridoxal 5'-phosphate (PLP). The sequence is that of Pyridoxine/pyridoxamine 5'-phosphate oxidase from Chromobacterium violaceum (strain ATCC 12472 / DSM 30191 / JCM 1249 / CCUG 213 / NBRC 12614 / NCIMB 9131 / NCTC 9757 / MK).